A 115-amino-acid chain; its full sequence is T cell receptor beta variable 7-6 (115 aa).

The first 21 residues, 1-21, serve as a signal peptide directing secretion; sequence MGTSLLCWVVLGFLGTDHTGA. Positions 22–115 constitute an Ig-like domain; that stretch reads GVSQSPRYKV…SAMYRCASSL (94 aa). Cys42 and Cys111 form a disulfide bridge.

Alpha-beta TR is a heterodimer composed of an alpha and beta chain; disulfide-linked. The alpha-beta TR is associated with the transmembrane signaling CD3 coreceptor proteins to form the TR-CD3 (TcR or TCR). The assembly of alpha-beta TR heterodimers with CD3 occurs in the endoplasmic reticulum where a single alpha-beta TR heterodimer associates with one CD3D-CD3E heterodimer, one CD3G-CD3E heterodimer and one CD247 homodimer forming a stable octameric structure. CD3D-CD3E and CD3G-CD3E heterodimers preferentially associate with TR alpha and TR beta chains, respectively. The association of the CD247 homodimer is the last step of TcR assembly in the endoplasmic reticulum and is required for transport to the cell surface.

The protein resides in the cell membrane. Functionally, v region of the variable domain of T cell receptor (TR) beta chain that participates in the antigen recognition. Alpha-beta T cell receptors are antigen specific receptors which are essential to the immune response and are present on the cell surface of T lymphocytes. Recognize peptide-major histocompatibility (MH) (pMH) complexes that are displayed by antigen presenting cells (APC), a prerequisite for efficient T cell adaptive immunity against pathogens. Binding of alpha-beta TR to pMH complex initiates TR-CD3 clustering on the cell surface and intracellular activation of LCK that phosphorylates the ITAM motifs of CD3G, CD3D, CD3E and CD247 enabling the recruitment of ZAP70. In turn ZAP70 phosphorylates LAT, which recruits numerous signaling molecules to form the LAT signalosome. The LAT signalosome propagates signal branching to three major signaling pathways, the calcium, the mitogen-activated protein kinase (MAPK) kinase and the nuclear factor NF-kappa-B (NF-kB) pathways, leading to the mobilization of transcription factors that are critical for gene expression and essential for T cell growth and differentiation. The T cell repertoire is generated in the thymus, by V-(D)-J rearrangement. This repertoire is then shaped by intrathymic selection events to generate a peripheral T cell pool of self-MH restricted, non-autoaggressive T cells. Post-thymic interaction of alpha-beta TR with the pMH complexes shapes TR structural and functional avidity. This Homo sapiens (Human) protein is T cell receptor beta variable 7-6.